A 1816-amino-acid chain; its full sequence is Kinesin-like protein KIF1B (1816 aa).

The residue at position 2 (Ser2) is an N-acetylserine. Positions 5 to 354 (SVKVAVRVRP…LRYADRAKQI (350 aa)) constitute a Kinesin motor domain. 97–104 (GQTGAGKS) is a binding site for ATP. The tract at residues 270 to 350 (NINKSLTTLG…TLSTLRYADR (81 aa)) is interaction with KIFBP. The stretch at 365-386 (NAKLVRELKEEVTRLKDLLRAQ) forms a coiled coil. The segment at 431–450 (FSTASMGSLTSSPSSCSLSS) is disordered. Residues 432-450 (STASMGSLTSSPSSCSLSS) show a composition bias toward low complexity. The stretch at 470 to 502 (GEEAIERLKESEKIIAELNETWEEKLRKTEAIR) forms a coiled coil. An FHA domain is found at 556–612 (TRVGQADAERRQDIVLSGAHIKEEHCIFRSERSNSGEVIVTLEPCERSETYVNGKRV). A phosphothreonine mark is found at Thr647 and Thr652. 2 positions are modified to phosphoserine: Gln663 and Glu665. Coiled coils occupy residues 668-737 (EKQG…EEEV) and 841-869 (SLEK…AQDE). Residues Ser1054 and Ser1057 each carry the phosphoserine modification. Phosphothreonine is present on Thr1075. Phosphoserine is present on residues Asn1141, Ser1416, Ser1454, and Ser1487. Residues 1550–1570 (STTTFESAITPSESSGYDSGD) are disordered. Over residues 1554–1566 (FESAITPSESSGY) the composition is skewed to polar residues. Phosphoserine occurs at positions 1573, 1603, 1610, and 1613. Positions 1617-1660 (RDPSESSFSSATLTPSSTCPSLVDSRSNSLDQKTPEANSRASSP) are disordered. Residues 1621–1634 (ESSFSSATLTPSST) show a composition bias toward low complexity. The segment covering 1640 to 1658 (DSRSNSLDQKTPEANSRAS) has biased composition (polar residues). A PH domain is found at 1702-1799 (VSKKGYLHFK…WLYAFNPLLA (98 aa)).

It belongs to the TRAFAC class myosin-kinesin ATPase superfamily. Kinesin family. Unc-104 subfamily. Monomer. Interacts with KIFBP; positively regulates KIF1B microtubule motor activity. Interacts (via C-terminus end of the kinesin-motor domain) with CHP1; the interaction occurs in a calcium-dependent manner. In terms of assembly, interacts with MADD (via death domain); links this isoform to Rab3-carrying vesicles in anterograde synaptic vesicle transport. Isoform 3 is abundant in the skeletal muscle. It is also expressed in fetal brain, lung and kidney, and adult heart, placenta, testis, ovary and small intestine. Isoform 2 is abundant in the brain and also expressed in fetal heart, lung, liver and kidney, and adult skeletal muscle, placenta, liver, kidney, heart, spleen, thymus, prostate, testis, ovary, small intestine, colon and pancreas.

The protein localises to the cytoplasm. The protein resides in the cytoskeleton. It localises to the cytoplasmic vesicle. It is found in the secretory vesicle. Its subcellular location is the synaptic vesicle membrane. The protein localises to the mitochondrion. The enzyme catalyses ATP + H2O + a kinesin associated with a microtubule at position (n) = ADP + phosphate a kinesin associated with a microtubule at position (n+1, toward the plus end).. Its function is as follows. Has a plus-end-directed microtubule motor activity and functions as a motor for transport of vesicles and organelles along microtubules. Has a plus-end-directed microtubule motor activity and functions as a motor for anterograde synaptic vesicle transport along axonal microtubules from the cell body to the presynapse in neuronal cells. Functions as a downstream effector in a developmental apoptotic pathway that is activated when nerve growth factor (NGF) becomes limiting for neuronal progenitor cells. Functionally, has a plus-end-directed microtubule motor activity and functions as a motor for anterograde transport of mitochondria. This chain is Kinesin-like protein KIF1B, found in Homo sapiens (Human).